The primary structure comprises 465 residues: Tetratricopeptide repeat protein 38 (465 aa).

TPR repeat units lie at residues 104-137, 176-209, and 248-281; these read REQLHVSAVEMFAKGNFPRACDLWEQILRDHPTD, SYVKGIYSFGLMETNFYDQAQKLAKEALSIEPTD, and CHNYWHWALYLIEKGDYEAALTIYDSHILPSLQA.

Belongs to the TTC38 family.

In Mus musculus (Mouse), this protein is Tetratricopeptide repeat protein 38 (Ttc38).